Reading from the N-terminus, the 481-residue chain is Protein NRT1/ PTR FAMILY 1.3 (481 aa).

12 consecutive transmembrane segments (helical) span residues 32–52 (LAYF…YGMG), 57–77 (ANIL…GAFI), 88–108 (IGFG…TTII), 124–144 (LLKS…AGGV), 173–193 (FNWY…LLVF), 202–222 (IGFG…FAAS), 259–279 (IWST…FIVL), 302–322 (IFLV…IVPL), 333–353 (LGVM…ISAL), 374–394 (AMWL…NTIA), 422–442 (ASLI…GSWI), and 451–471 (LDYY…YFVW).

The protein belongs to the major facilitator superfamily. Proton-dependent oligopeptide transporter (POT/PTR) (TC 2.A.17) family. As to expression, expressed in roots.

It localises to the membrane. The protein is Protein NRT1/ PTR FAMILY 1.3 (NPF1.3) of Arabidopsis thaliana (Mouse-ear cress).